We begin with the raw amino-acid sequence, 232 residues long: Phosphoribosylformylglycinamidine synthase subunit PurQ (232 aa).

One can recognise a Glutamine amidotransferase type-1 domain in the interval Phe-3 to Val-232. The active-site Nucleophile is the Cys-86. Catalysis depends on residues His-203 and Glu-205.

Part of the FGAM synthase complex composed of 1 PurL, 1 PurQ and 2 PurS subunits.

The protein localises to the cytoplasm. The enzyme catalyses N(2)-formyl-N(1)-(5-phospho-beta-D-ribosyl)glycinamide + L-glutamine + ATP + H2O = 2-formamido-N(1)-(5-O-phospho-beta-D-ribosyl)acetamidine + L-glutamate + ADP + phosphate + H(+). It catalyses the reaction L-glutamine + H2O = L-glutamate + NH4(+). It functions in the pathway purine metabolism; IMP biosynthesis via de novo pathway; 5-amino-1-(5-phospho-D-ribosyl)imidazole from N(2)-formyl-N(1)-(5-phospho-D-ribosyl)glycinamide: step 1/2. Its function is as follows. Part of the phosphoribosylformylglycinamidine synthase complex involved in the purines biosynthetic pathway. Catalyzes the ATP-dependent conversion of formylglycinamide ribonucleotide (FGAR) and glutamine to yield formylglycinamidine ribonucleotide (FGAM) and glutamate. The FGAM synthase complex is composed of three subunits. PurQ produces an ammonia molecule by converting glutamine to glutamate. PurL transfers the ammonia molecule to FGAR to form FGAM in an ATP-dependent manner. PurS interacts with PurQ and PurL and is thought to assist in the transfer of the ammonia molecule from PurQ to PurL. This Gloeobacter violaceus (strain ATCC 29082 / PCC 7421) protein is Phosphoribosylformylglycinamidine synthase subunit PurQ.